The sequence spans 1377 residues: Dicer-like protein 2 (1377 aa).

In terms of domain architecture, Helicase ATP-binding spans 23-203; it reads MFEASLKENI…MKTLESNLDS (181 aa). 36-43 provides a ligand contact to ATP; sequence MDTGTGKT. The short motif at 144–147 is the DEAH box element; the sequence is DEAH. The region spanning 368-531 is the Helicase C-terminal domain; that stretch reads ALINFLDKFD…AYQDEERRLR (164 aa). Positions 561 to 655 constitute a Dicer dsRNA-binding fold domain; it reads VVTHLYHFCA…LPLTKNPEMR (95 aa). RNase III domains are found at residues 914–1052 and 1092–1275; these read RLCA…LDGG and DGDL…VDSG. Mg(2+) contacts are provided by E1131, D1261, and E1264.

It belongs to the helicase family. Dicer subfamily. It depends on Mg(2+) as a cofactor. The cofactor is Mn(2+).

Dicer-like endonuclease involved in cleaving double-stranded RNA in the RNA interference (RNAi) pathway. Produces 21 to 25 bp dsRNAs (siRNAs) which target the selective destruction of homologous RNAs leading to sequence-specific suppression of gene expression, called post-transcriptional gene silencing (PTGS). Part of a broad host defense response against viral infection and transposons. The polypeptide is Dicer-like protein 2 (dcl2) (Aspergillus oryzae (strain ATCC 42149 / RIB 40) (Yellow koji mold)).